The chain runs to 423 residues: Mannose-6-phosphate isomerase (423 aa).

An N-acetylalanine modification is found at Ala2. Residues Ser102 and Ser108 each carry the phosphoserine modification. Gln110, His112, Glu137, and His276 together coordinate Zn(2+). Arg295 is an active-site residue.

Belongs to the mannose-6-phosphate isomerase type 1 family. Zn(2+) serves as cofactor.

The protein localises to the cytoplasm. It catalyses the reaction D-mannose 6-phosphate = D-fructose 6-phosphate. It functions in the pathway nucleotide-sugar biosynthesis; GDP-alpha-D-mannose biosynthesis; alpha-D-mannose 1-phosphate from D-fructose 6-phosphate: step 1/2. Isomerase that catalyzes the interconversion of fructose-6-P and mannose-6-P and has a critical role in the supply of D-mannose derivatives required for many eukaryotic glycosylation reactions. In Pan troglodytes (Chimpanzee), this protein is Mannose-6-phosphate isomerase (MPI).